A 91-amino-acid chain; its full sequence is Small ribosomal subunit protein uS15c (91 aa).

It belongs to the universal ribosomal protein uS15 family. In terms of assembly, part of the 30S ribosomal subunit.

It localises to the plastid. Its subcellular location is the chloroplast. The protein is Small ribosomal subunit protein uS15c (rps15) of Ceratophyllum demersum (Rigid hornwort).